Consider the following 331-residue polypeptide: T-cell acute lymphocytic leukemia protein 1 (331 aa).

Basic and acidic residues predominate over residues 1–22 (MTERPPSEAARSDPQLEGRDAA). Disordered regions lie at residues 1–27 (MTER…ASMA) and 40–86 (ETSR…EARH). Ser12 carries the phosphoserine modification. Over residues 56–70 (ARGGPGGGPAGGGGA) the composition is skewed to gly residues. Basic and acidic residues predominate over residues 72–86 (RDLKGRDAATAEARH). A phosphoserine mark is found at Ser122 and Ser172. The bHLH domain maps to 187–239 (VRRIFTNSRERWRQQNVNGAFAELRKLIPTHPPDKKLSKNEILRLAMKYINFL). Positions 249-331 (EGTQRAKTGK…LPAADGAGPR (83 aa)) are disordered. A compositionally biased stretch (gly residues) spans 263 to 275 (GAGGGGGGGGGGA).

Efficient DNA binding requires dimerization with another bHLH protein. Forms heterodimers with TCF3. Binds to the LIM domain containing protein LMO2 and to DRG1. Can assemble in a complex with LDB1 and LMO2. Component of a TAL-1 complex composed at least of CBFA2T3, LDB1, TAL1 and TCF3. Interacts with SBNO2; this interaction inhibits TAL1 occupancy of the DCSTAMP promoter, leading to the activation of the DCSTAMP promoter by the transcription factor MITF. In terms of processing, phosphorylated on serine residues. Phosphorylation of Ser-122 is strongly stimulated by hypoxia. Post-translationally, ubiquitinated; subsequent to hypoxia-dependent phosphorylation of Ser-122, ubiquitination targets the protein for rapid degradation via the ubiquitin system. This process may be characteristic for microvascular endothelial cells, since it could not be observed in large vessel endothelial cells. Leukemic stem cell.

The protein resides in the nucleus. Its function is as follows. Implicated in the genesis of hemopoietic malignancies. It may play an important role in hemopoietic differentiation. Serves as a positive regulator of erythroid differentiation. This is T-cell acute lymphocytic leukemia protein 1 (TAL1) from Homo sapiens (Human).